Reading from the N-terminus, the 414-residue chain is MSFSSLLPPPEHSPPDDVNSREVEIITKEHDFIVNALTKKEAVHSSNNNIGSFVGSQVANFNDVIPLRQKDFYGVQAPLPTTQEIELCKVRTQEVVNRLLHKFTDKGKAGYQKDTRKITTGSRIITIESKRQDPLQPSRQKNTSSKIVLPEDDETDTPILHATDDAKSKRLTKEERAKWNIPAAVSSWKNPMGYTVGLKHRAAHGKKTGNVGSINNKVSDIVAALDETDQEIREGIQQENELKRKQLKEEERIKEEKLRAIAERSKIQTQSSAVKKRGSRFEGGRHQNKKIKKEEPPIKSAAERLKELAYAQGREVSEKVILGAAKATTTGTGANVHYDSRLFSKGANAAAKRSEEQVYDNPLFVQQEIDSIYRVNAKSIDEANSVSASRYGPIQFTKAHSLDDKSTAKDEEET.

Disordered stretches follow at residues 128–159 (ESKR…DTPI) and 264–292 (RSKI…KKIK). The span at 135–146 (LQPSRQKNTSSK) shows a compositional bias: polar residues.

It belongs to the SNW family. As to quaternary structure, associated with the spliceosome.

Its subcellular location is the nucleus. In terms of biological role, involved in pre-mRNA splicing. The chain is Pre-mRNA-processing protein 45 (PRP45) from Candida glabrata (strain ATCC 2001 / BCRC 20586 / JCM 3761 / NBRC 0622 / NRRL Y-65 / CBS 138) (Yeast).